A 1149-amino-acid chain; its full sequence is MSLVQSHGTSGLFTEPPNSINQQESSGPSLPAQDATQASASSARAGATPAINSTKRKYRGAVVAQRATLSISAILDNGQCVQIKYHSNLASALTNLCNTNLYDLPACLNKPITVHNLPTLIEEAAASYSLIYYYQRGTVRKVEFRAEIPLLSFPLKFLVKHGKVFLIKDISPMQRCEFCGSFFKVTHTCTLRRRDFYFHHVASHSGDWWEKISFSPIGAPANTERLFIVYDVETYTWHGKFGKQLVPFMLVFQLLGDEHLVNAAKNLATTQNWDTWNSNEQTALYYCITPEKRAIGVKFKTFRDTLQQHFANNLWSHVLCQNPKLMEEAAALGLENPEDITANQLKKFKLQGTPRFIEVYVVGHNITGFDEILLAAQVVSTRAEIPPVFDISRNFMPRAGRLLFNDITYSLPNPSYVPSKDYRHWEQGQVLASDLKTQYIKFMVRDTFSLTHTSLKNAAKAYSLTVSKGCCPYQAVNEFYMLGSYQQDADGFPDLKYWKDQEEYCFNKDLWKKEKKGAYDIIQQTLDYCALDVQVTAQLVNKLIESYQIFIKNSVNLPETYFNVFQRPTISSNSHAIFKQILYRAEKPNAPHLNTIIMAPSNEMYEYVRLSIRGGRCYPTYIGVLQEPVFVYDICGMYASALTHPFPAGSPLNPYERAVAIKAYEHKMQEHKTISYFDEDLLPGIFTIDADPPAEEFLDVLPPFCSRKGGRLCWTNEPLRGEVTTSIDVITLHNRGWKVTLIPDTRTTVFPEWKCLAREYVQLNINAKEKADKSKNQTMRSIAKLLSNALYGSFATKLDNKKTVFSDQIESNIAKEIASGAYVVKSSSYIETDNLCAEIMPEFVVAYPPVNFDVHRLAPPSYSEEYPTENPHAEGPFMQNFNMTSYRYKPIMFIDAEDDDFCLHTLEKSTPLITNNRYASQIASFVLAWTRAFVSEWSQFLYENDAGIPLEKRILKSVYGDTDSLFTTMEGYRLMEEKGKRRLKKNGGNLVFDPNNPELTWLVECETKCEKCGADAYSSESVYLAPKLYALKDTTCPECQYVGKGKLRAKGHATSTLSYDVLKACYYADLQQGSDIFKTSRMSLRRTLTSVQTHVQPFTVTETTLTRKLRPWKDKTLHALDMNRLIPYSRKYPNPRNNETTWMELQWMT.

Over residues 1 to 28 the composition is skewed to polar residues; it reads MSLVQSHGTSGLFTEPPNSINQQESSGP. Residues 1–49 form a disordered region; that stretch reads MSLVQSHGTSGLFTEPPNSINQQESSGPSLPAQDATQASASSARAGATP. Residues 31–49 show a composition bias toward low complexity; it reads PAQDATQASASSARAGATP.

The protein belongs to the DNA polymerase type-B family. As to quaternary structure, heterodimer with the terminal protein; this heterodimer binds to bp 9 to 18 of the genome. Forms a complex with viral pTP, DBP and hosts NFIA and POU2F1/OCT1 for initiation of replication.

Its subcellular location is the host nucleus. It carries out the reaction DNA(n) + a 2'-deoxyribonucleoside 5'-triphosphate = DNA(n+1) + diphosphate. Eukaryotic-type DNA polymerase involved in viral genomic replication. DNA synthesis is protein primed, and acts in a strand displacement replication. Assembles in complex with viral pTP, DBP, host NFIA and host POU2F1/OCT1 on viral origin of replication. The polymerase covalently transfers dCMP onto pTP, thereby initiating complementary strand synthesis. This chain is DNA polymerase, found in Canine adenovirus serotype 1 (strain CLL) (CAdV-1).